Reading from the N-terminus, the 424-residue chain is ATP synthase subunit beta, mitochondrial (424 aa).

A mitochondrion-targeting transit peptide spans Met-1–Leu-60. ATP is bound by residues Gly-187–Thr-194, Gly-188–Val-195, Glu-219–Arg-220, and Tyr-374.

The protein belongs to the ATPase alpha/beta chains family. F-type ATPases have 2 components, CF(1) - the catalytic core - and CF(0) - the membrane proton channel. CF(1) has five subunits: alpha(3), beta(3), gamma(1), delta(1), epsilon(1). CF(0) has three main subunits: a, b and c.

It localises to the mitochondrion. The protein localises to the mitochondrion inner membrane. The enzyme catalyses ATP + H2O + 4 H(+)(in) = ADP + phosphate + 5 H(+)(out). In terms of biological role, ATP synthase subunit beta; part of the gene cluster that mediates the biosynthesis of citreoviridin, an inhibitor of the of F1-ATPase beta-subunit. Mitochondrial membrane ATP synthase (F(1)F(0) ATP synthase or Complex V) produces ATP from ADP in the presence of a proton gradient across the membrane which is generated by electron transport complexes of the respiratory chain. Whereas ctvA to ctvD constitute the core biosynthetic gene cluster, ctvE acts as a self-resistance gene. This chain is ATP synthase subunit beta, mitochondrial, found in Aspergillus terreus (strain NIH 2624 / FGSC A1156).